The primary structure comprises 503 residues: Cysteine--tRNA ligase (503 aa).

C31 is a binding site for Zn(2+). The 'HIGH' region motif lies at 33 to 43; it reads PTVYDYAHIGN. Zn(2+) is bound by residues C225, H264, and E268. The 'KMSKS' region signature appears at 297–301; sequence KMSKS. Residue K300 coordinates ATP.

Belongs to the class-I aminoacyl-tRNA synthetase family. As to quaternary structure, monomer. It depends on Zn(2+) as a cofactor.

It is found in the cytoplasm. It carries out the reaction tRNA(Cys) + L-cysteine + ATP = L-cysteinyl-tRNA(Cys) + AMP + diphosphate. This is Cysteine--tRNA ligase from Bartonella tribocorum (strain CIP 105476 / IBS 506).